The sequence spans 205 residues: Holliday junction branch migration complex subunit RuvA (205 aa).

Residues 1 to 64 (MIGRLRGIVL…EDAQLLYGFN (64 aa)) are domain I. The interval 65–143 (DKQERALFRE…GLNGDLFNQS (79 aa)) is domain II. A flexible linker region spans residues 144 to 156 (SDINLPATAKQTT). The segment at 157-205 (SDADSEAEAAAALVSLGYKPQEASRMVSKIAKPGADCETLIREALRAVL) is domain III.

This sequence belongs to the RuvA family. In terms of assembly, homotetramer. Forms an RuvA(8)-RuvB(12)-Holliday junction (HJ) complex. HJ DNA is sandwiched between 2 RuvA tetramers; dsDNA enters through RuvA and exits via RuvB. An RuvB hexamer assembles on each DNA strand where it exits the tetramer. Each RuvB hexamer is contacted by two RuvA subunits (via domain III) on 2 adjacent RuvB subunits; this complex drives branch migration. In the full resolvosome a probable DNA-RuvA(4)-RuvB(12)-RuvC(2) complex forms which resolves the HJ.

Its subcellular location is the cytoplasm. Functionally, the RuvA-RuvB-RuvC complex processes Holliday junction (HJ) DNA during genetic recombination and DNA repair, while the RuvA-RuvB complex plays an important role in the rescue of blocked DNA replication forks via replication fork reversal (RFR). RuvA specifically binds to HJ cruciform DNA, conferring on it an open structure. The RuvB hexamer acts as an ATP-dependent pump, pulling dsDNA into and through the RuvAB complex. HJ branch migration allows RuvC to scan DNA until it finds its consensus sequence, where it cleaves and resolves the cruciform DNA. The polypeptide is Holliday junction branch migration complex subunit RuvA (Photorhabdus laumondii subsp. laumondii (strain DSM 15139 / CIP 105565 / TT01) (Photorhabdus luminescens subsp. laumondii)).